Consider the following 647-residue polypeptide: NADP-dependent malic enzyme, chloroplastic (647 aa).

The transit peptide at 1-61 directs the protein to the chloroplast; that stretch reads MMSLNSSSVV…VDGAVKDVNA (61 aa). Tyr-195 acts as the Proton donor in catalysis. Residue Arg-248 participates in NAD(+) binding. Lys-266 functions as the Proton acceptor in the catalytic mechanism. Residues Glu-338, Asp-339, and Asp-362 each coordinate a divalent metal cation. Asp-362 serves as a coordination point for NAD(+). Residue 391 to 407 participates in NADP(+) binding; it reads LFLGAGEAGTGIAELIA. An NAD(+)-binding site is contributed by Asn-503.

It belongs to the malic enzymes family. Homotetramer. Requires Mg(2+) as cofactor. It depends on Mn(2+) as a cofactor.

It is found in the plastid. It localises to the chloroplast. The enzyme catalyses (S)-malate + NADP(+) = pyruvate + CO2 + NADPH. The catalysed reaction is oxaloacetate + H(+) = pyruvate + CO2. Its pathway is photosynthesis; C3 acid pathway. Functionally, the chloroplastic ME isoform decarboxylates malate shuttled from neighboring mesophyll cells. The CO(2) released is then refixed by ribulose-bisphosphate carboxylase. This pathway eliminates the photorespiratory loss of CO(2) that occurs in most plants. The protein is NADP-dependent malic enzyme, chloroplastic (MODA) of Flaveria pringlei.